Consider the following 318-residue polypeptide: Mitochondrial thiamine pyrophosphate carrier (318 aa).

Solcar repeat units lie at residues 13-106 (NSKL…LTEL), 116-202 (HQFS…LKRA), and 214-309 (TGNL…FCNL). Helical transmembrane passes span 19–39 (AVAG…LDVI), 87–107 (ILSI…TELL), 122–142 (FVCG…VDVL), 173–193 (VFYK…GLQF), 220–240 (LLCG…LDLF), and 293–313 (ALST…FHCI).

Belongs to the mitochondrial carrier (TC 2.A.29) family.

The protein localises to the mitochondrion membrane. It catalyses the reaction thiamine phosphate(out) + thiamine diphosphate(in) = thiamine phosphate(in) + thiamine diphosphate(out). Its function is as follows. Mitochondrial transporter mediating uptake of thiamine diphosphate into mitochondria. It is not clear if the antiporter activity is affected by the membrane potential or by the proton electrochemical gradient. This chain is Mitochondrial thiamine pyrophosphate carrier (Slc25a19), found in Rattus norvegicus (Rat).